The primary structure comprises 1216 residues: Histone-lysine N-methyltransferase SETDB1-B (1216 aa).

A coiled-coil region spans residues 38-61 (KADLEQLQEWVEQREKEVADIDAL). 2 Tudor domains span residues 266 to 329 (RLFV…LKKT) and 356 to 412 (LLKP…NLKM). The segment at 417-513 (SQEKKMAGQQ…QGMPSDLQPK (97 aa)) is disordered. Pro residues predominate over residues 467 to 478 (PVAPQPAGPPQP). A compositionally biased stretch (polar residues) spans 482-498 (ESPSFKSQMAKKSTGQL). Residues 595–666 (HRGRNPLLTP…EMFCLDPYVL (72 aa)) form the MBD domain. The region spanning 728-801 (VGCDCTDGCR…MCTNRLVQHG (74 aa)) is the Pre-SET domain. Zn(2+) is bound by residues Cys730, Cys732, Cys736, Cys742, Cys744, Cys782, Cys786, Cys788, and Cys793. Positions 804-1179 (VRLQLFKTQN…AGTELTWDYN (376 aa)) constitute an SET domain. Residues 814-816 (KGW), Asp852, and Tyr854 each bind S-adenosyl-L-methionine. Disordered regions lie at residues 892–944 (LPAS…DTFV), 961–1057 (RRQA…KTQA), and 1081–1108 (KSGG…NGPK). Over residues 918–940 (DSSEESDDEKDDDSNEDDSDSSD) the composition is skewed to acidic residues. 2 stretches are compositionally biased toward basic and acidic residues: residues 966–976 (GLKEESQDSKD) and 983–997 (GEDR…ETGK). Residues 1003–1016 (WLTNQSSTSANQSV) are compositionally biased toward polar residues. Basic and acidic residues-rich tracts occupy residues 1020–1029 (GGIKTEKKDV) and 1046–1055 (DDNKEREKKT). Over residues 1082 to 1105 (SGGGGAGGGGSGPSHGHGGGGGDN) the composition is skewed to gly residues. S-adenosyl-L-methionine-binding positions include Arg1133 and 1136 to 1137 (NH). Residues Cys1139, Cys1192, Cys1194, and Cys1199 each coordinate Zn(2+). Residues 1188-1204 (KELLCCCGSTECRGRLL) enclose the Post-SET domain.

Belongs to the class V-like SAM-binding methyltransferase superfamily. Histone-lysine methyltransferase family. Suvar3-9 subfamily.

The protein resides in the nucleus. It is found in the chromosome. It catalyses the reaction L-lysyl(4)-[histone H3] + 3 S-adenosyl-L-methionine = N(6),N(6),N(6)-trimethyl-L-lysyl(4)-[histone H3] + 3 S-adenosyl-L-homocysteine + 3 H(+). In terms of biological role, histone methyltransferase that specifically trimethylates 'Lys-9' of histone H3. H3 'Lys-9' trimethylation represents a specific tag for epigenetic transcriptional repression by recruiting HP1 (CBX1, CBX3 and/or CBX5) proteins to methylated histones. Mainly functions in euchromatin regions, thereby playing a central role in the silencing of euchromatic genes. H3 'Lys-9' trimethylation is coordinated with DNA methylation. Plays a role in promoter hypermethylation and transcriptional silencing of tumor suppressor genes (TSGs) or other tumor-related genes. Also required to maintain a transcriptionally repressive state of genes in undifferentiated embryonic stem cells (ESCs). Associates at promoter regions of tumor suppressor genes (TSGs) leading to their gene silencing. In Danio rerio (Zebrafish), this protein is Histone-lysine N-methyltransferase SETDB1-B (setdb1b).